Reading from the N-terminus, the 126-residue chain is Holo-[acyl-carrier-protein] synthase (126 aa).

D8 and E59 together coordinate Mg(2+).

This sequence belongs to the P-Pant transferase superfamily. AcpS family. It depends on Mg(2+) as a cofactor.

Its subcellular location is the cytoplasm. It carries out the reaction apo-[ACP] + CoA = holo-[ACP] + adenosine 3',5'-bisphosphate + H(+). Functionally, transfers the 4'-phosphopantetheine moiety from coenzyme A to a Ser of acyl-carrier-protein. The polypeptide is Holo-[acyl-carrier-protein] synthase (Rickettsia akari (strain Hartford)).